The sequence spans 350 residues: S-adenosylmethionine:tRNA ribosyltransferase-isomerase (350 aa).

This sequence belongs to the QueA family. Monomer.

The protein localises to the cytoplasm. The catalysed reaction is 7-aminomethyl-7-carbaguanosine(34) in tRNA + S-adenosyl-L-methionine = epoxyqueuosine(34) in tRNA + adenine + L-methionine + 2 H(+). It functions in the pathway tRNA modification; tRNA-queuosine biosynthesis. Functionally, transfers and isomerizes the ribose moiety from AdoMet to the 7-aminomethyl group of 7-deazaguanine (preQ1-tRNA) to give epoxyqueuosine (oQ-tRNA). The sequence is that of S-adenosylmethionine:tRNA ribosyltransferase-isomerase from Bacillus cereus (strain G9842).